Here is a 430-residue protein sequence, read N- to C-terminus: MLSFLGKSVALLAALQATLSSASPLATEERSIEKRANGYANSVYFTNWGIYDRNFQPADLVASDVTHVIYSFMNLQADGTVVSGDTYADFEKHYADDSWNDVGTNAYGCAKQLFKVKKANRGLKVLLSIGGWTWSTNFPSAASTDANRKNFAKTAITFMKDWGFDGIDVDWEYPADATQASNMVLLLKEVRSQLDAYAAQYAPGYHFLLTIAAPAGKDNYSKLRLADLGQVLDYINLMAYDYAGSFSPLTGHDANLFANPSNPNATPFNTDSAVKDYIKGGVPANKIVLGMPIYGRSFQNTAGIGQTYNGVGGGGGGSTGSWEAGIWDYKALPKAGATIQYDSVAKGYYSYNAGTKELISFDTPDMINTKVAYLKSLGLGGSMFWEASADKKGADSLIGTSHRALGGLDTTQNLLSYPNSKYDNIRNGLN.

Positions 1–22 are cleaved as a signal peptide; sequence MLSFLGKSVALLAALQATLSSA. A propeptide spanning residues 23-35 is cleaved from the precursor; the sequence is SPLATEERSIEKR. The 370-residue stretch at 39–408 folds into the GH18 domain; sequence YANSVYFTNW…GTSHRALGGL (370 aa). Residues 103-104 and 130-133 each bind chitin; these read GT and GGWT. The Proton donor role is filled by Glu172. Chitin is bound at residue Tyr173. Asn219 carries N-linked (GlcNAc...) asparagine glycosylation. Residues 238–241 and Trp385 each bind chitin; that span reads MAYD.

This sequence belongs to the glycosyl hydrolase 18 family. Chitinase class V subfamily.

The protein resides in the secreted. The enzyme catalyses Random endo-hydrolysis of N-acetyl-beta-D-glucosaminide (1-&gt;4)-beta-linkages in chitin and chitodextrins.. In terms of biological role, secreted chitinase involved in the degradation of chitin, a component of the cell walls of fungi and exoskeletal elements of some animals (including worms and arthropods). Plays a morphogenetic role during apical growth, cell division and differentiation (cell wall morphogenesis). Also acts as an antifungal agent. Involved in the degradation and further assimilation of phytopathogenic fungi, namely mycoparasitism, the major mechanism accounting for the antagonistic activity against phytopathogenic fungi displayed by Trichoderma. The sequence is that of Endochitinase 46 (chit46) from Trichoderma harzianum (Hypocrea lixii).